The following is a 270-amino-acid chain: L-fucose dehydrogenase (270 aa).

The NAD(+) site is built by Arg19, Ile21, Asp40, Lys41, Asp62, Val63, Asn89, Tyr154, Lys158, Ile187, Thr189, and Leu191.

The protein belongs to the short-chain dehydrogenases/reductases (SDR) family.

The enzyme catalyses L-fucose + NAD(+) = L-fucono-1,5-lactone + NADH + H(+). It carries out the reaction D-arabinose + NAD(+) = D-arabinono-1,5-lactone + NADH + H(+). It catalyses the reaction L-galactose + NAD(+) = L-galactono-1,5-lactone + NADH + H(+). Functionally, catalyzes the NAD(+)-dependent oxidation of L-fucose, yielding L-fucono-1,5-lactone, which rapidly converts spontaneously to L-fucone-1,4-lactone. Does not use NADPH. Displays low activity on L-fucose, D-arabinose and L-galactose compared with rabbit and human. This is consitent with the low L-fucose metabolism observed in this species. This Rattus norvegicus (Rat) protein is L-fucose dehydrogenase (Hsd17b14).